The primary structure comprises 386 residues: Oxytocin receptor (386 aa).

Residues 1–31 (MEGVLAANWSAEAVNSSAAPPEAEGNRTAGP) form a disordered region. At 1-38 (MEGVLAANWSAEAVNSSAAPPEAEGNRTAGPPQRNEAL) the chain is on the extracellular side. N-linked (GlcNAc...) asparagine glycosylation is found at asparagine 8, asparagine 15, and asparagine 26. A helical transmembrane segment spans residues 39–63 (ARVEVAVLCLILFLALSGNACVLLA). Residues 64 to 74 (LRTTRHKHSRL) lie on the Cytoplasmic side of the membrane. A helical membrane pass occupies residues 75-97 (FFFMKHLSIADLVVAVFQVLPQL). The Extracellular segment spans residues 98–113 (LWDITFRFYGPDLLCR). Cysteine 112 and cysteine 187 form a disulfide bridge. The chain crosses the membrane as a helical span at residues 114 to 135 (LVKYLQVVGMFASTYLLLLMSL). The Cytoplasmic portion of the chain corresponds to 136-154 (DRCLAICQPLRALRRPADR). A helical transmembrane segment spans residues 155-175 (LAVLATWLGCLVASAPQVHIF). Residues 176–202 (SLREVADGVFDCWAVFIQPWGPKAYIT) lie on the Extracellular side of the membrane. Residues 203-225 (WITLAVYIVPVIVLAACYGLISF) form a helical membrane-spanning segment. Residues 226–277 (KIWQNLRLKTAAEAAEAIAGTEGAAAGSRGRAALARVSSVKLISKAKIRTVK) are Cytoplasmic-facing. The chain crosses the membrane as a helical span at residues 278-296 (MTFIIVLAFIVCWTPFFFV). Residues 297 to 311 (QMWSVWDADAPKEAS) lie on the Extracellular side of the membrane. The chain crosses the membrane as a helical span at residues 312 to 334 (AFIIAMLLASLNSCCNPWIYMLF). At 335–386 (TGHLFHELVQRFLCCSSSHLKTSRPGETSVSKKSNSSTFVLSQHSSSQKSCS) the chain is on the cytoplasmic side. The segment covering 355–375 (KTSRPGETSVSKKSNSSTFVL) has biased composition (polar residues). Residues 355-386 (KTSRPGETSVSKKSNSSTFVLSQHSSSQKSCS) form a disordered region. Residues serine 368 and serine 370 each carry the phosphoserine modification. The span at 376–386 (SQHSSSQKSCS) shows a compositional bias: low complexity.

It belongs to the G-protein coupled receptor 1 family. Vasopressin/oxytocin receptor subfamily.

Its subcellular location is the cell membrane. Functionally, receptor for oxytocin. The activity of this receptor is mediated by G proteins which activate a phosphatidylinositol-calcium second messenger system. The sequence is that of Oxytocin receptor (OXTR) from Sus scrofa (Pig).